The primary structure comprises 462 residues: ATP synthase subunit beta (462 aa).

152–159 (GGAGVGKT) serves as a coordination point for ATP.

The protein belongs to the ATPase alpha/beta chains family. F-type ATPases have 2 components, CF(1) - the catalytic core - and CF(0) - the membrane proton channel. CF(1) has five subunits: alpha(3), beta(3), gamma(1), delta(1), epsilon(1). CF(0) has three main subunits: a(1), b(2) and c(9-12). The alpha and beta chains form an alternating ring which encloses part of the gamma chain. CF(1) is attached to CF(0) by a central stalk formed by the gamma and epsilon chains, while a peripheral stalk is formed by the delta and b chains.

The protein resides in the cell inner membrane. It carries out the reaction ATP + H2O + 4 H(+)(in) = ADP + phosphate + 5 H(+)(out). Produces ATP from ADP in the presence of a proton gradient across the membrane. The catalytic sites are hosted primarily by the beta subunits. This is ATP synthase subunit beta from Tolumonas auensis (strain DSM 9187 / NBRC 110442 / TA 4).